A 101-amino-acid polypeptide reads, in one-letter code: Ubiquitin-like protein SMT3 (101 aa).

Ser2 bears the N-acetylserine mark. Residues Ser2 and Ser4 each carry the phosphoserine modification. The Ubiquitin-like domain maps to Thr22–Gly98. Gly98 is covalently cross-linked (Glycyl lysine isopeptide (Gly-Lys) (interchain with K-? in acceptor proteins)). The propeptide occupies Ala99–Tyr101.

It belongs to the ubiquitin family. SUMO subfamily. In terms of assembly, activated by a E1 ligase composed of AOS1 and UBA2.

Its function is as follows. Not known; suppressor of MIF2 mutations. In Saccharomyces cerevisiae (strain ATCC 204508 / S288c) (Baker's yeast), this protein is Ubiquitin-like protein SMT3 (SMT3).